The primary structure comprises 280 residues: 4-diphosphocytidyl-2-C-methyl-D-erythritol kinase (280 aa).

Lys11 is a catalytic residue. Pro95–Ser105 serves as a coordination point for ATP. Residue Asp137 is part of the active site.

Belongs to the GHMP kinase family. IspE subfamily.

The enzyme catalyses 4-CDP-2-C-methyl-D-erythritol + ATP = 4-CDP-2-C-methyl-D-erythritol 2-phosphate + ADP + H(+). It functions in the pathway isoprenoid biosynthesis; isopentenyl diphosphate biosynthesis via DXP pathway; isopentenyl diphosphate from 1-deoxy-D-xylulose 5-phosphate: step 3/6. Its function is as follows. Catalyzes the phosphorylation of the position 2 hydroxy group of 4-diphosphocytidyl-2C-methyl-D-erythritol. The polypeptide is 4-diphosphocytidyl-2-C-methyl-D-erythritol kinase (Pelobacter propionicus (strain DSM 2379 / NBRC 103807 / OttBd1)).